Here is a 1370-residue protein sequence, read N- to C-terminus: DNA-directed RNA polymerase subunit beta (1370 aa).

This sequence belongs to the RNA polymerase beta chain family. The RNAP catalytic core consists of 2 alpha, 1 beta, 1 beta' and 1 omega subunit. When a sigma factor is associated with the core the holoenzyme is formed, which can initiate transcription.

It catalyses the reaction RNA(n) + a ribonucleoside 5'-triphosphate = RNA(n+1) + diphosphate. In terms of biological role, DNA-dependent RNA polymerase catalyzes the transcription of DNA into RNA using the four ribonucleoside triphosphates as substrates. The sequence is that of DNA-directed RNA polymerase subunit beta from Syntrophobacter fumaroxidans (strain DSM 10017 / MPOB).